A 233-amino-acid polypeptide reads, in one-letter code: Large ribosomal subunit protein uL1 (233 aa).

The protein belongs to the universal ribosomal protein uL1 family. As to quaternary structure, part of the 50S ribosomal subunit.

Binds directly to 23S rRNA. The L1 stalk is quite mobile in the ribosome, and is involved in E site tRNA release. Its function is as follows. Protein L1 is also a translational repressor protein, it controls the translation of the L11 operon by binding to its mRNA. This is Large ribosomal subunit protein uL1 from Pseudoalteromonas atlantica (strain T6c / ATCC BAA-1087).